The following is a 286-amino-acid chain: Protein Bride of doubletime (286 aa).

In terms of assembly, interacts with dco (via nuclear localization signal). Interacts with Ankrd49; interaction promotes the stability of both complex members.

The protein resides in the cytoplasm. The protein localises to the cytosol. It is found in the cell membrane. Functionally, functions in planar polarity establishment and circadian rhythms by promoting the activity and localization of dco/dbt. Required for regulating the levels of dco/dbt and per in the nuclei of photoreceptor cells and thereby is involved in normal oscillations of the circadian clock proteins in the eye. In the dark, the cry circadian and rhodopsin visual pathways, activate the accumulation of the protein into Arr1- and Arr2-dependent cytosolic foci which are required for dco localization to photoreceptor nuclei. It is possible that the accumulation into foci results in the dissociation of the protein from dco, thus allowing dco to interact with importins and microtubles for nuclear transport. By promoting nuclei localization and kinase activity of dco towards per, it is essential for regulating normal cycles of per nuclear accumulation in brain circadian neurons and thus is important for normal circadian behavior. Essential for regulating the establishment of planar cell polarity in the wing. Forms a complex with Ankrd49 which likely functions in the regulation of planar polarity by promoting the activity of dco during planar polarity establishment. Within the complex, directly promotes dco activity in regulating phosphorylation and asymmetric localization of core planar polarity proteins such as dsh. The sequence is that of Protein Bride of doubletime from Drosophila melanogaster (Fruit fly).